The primary structure comprises 233 residues: LexA repressor (233 aa).

A DNA-binding region (H-T-H motif) is located at residues 26-46 (FDEMKDALDLRSKSGIHRLIT). Residues S154 and K192 each act as for autocatalytic cleavage activity in the active site.

Belongs to the peptidase S24 family. Homodimer.

It carries out the reaction Hydrolysis of Ala-|-Gly bond in repressor LexA.. In terms of biological role, represses a number of genes involved in the response to DNA damage (SOS response), including recA and lexA. In the presence of single-stranded DNA, RecA interacts with LexA causing an autocatalytic cleavage which disrupts the DNA-binding part of LexA, leading to derepression of the SOS regulon and eventually DNA repair. The polypeptide is LexA repressor (Nitrobacter winogradskyi (strain ATCC 25391 / DSM 10237 / CIP 104748 / NCIMB 11846 / Nb-255)).